The sequence spans 60 residues: Short neurotoxin C (60 aa).

Intrachain disulfides connect cysteine 3–cysteine 22, cysteine 17–cysteine 39, cysteine 41–cysteine 52, and cysteine 53–cysteine 58.

The protein belongs to the three-finger toxin family. Short-chain subfamily. Type I alpha-neurotoxin sub-subfamily. Expressed by the venom gland.

The protein localises to the secreted. Binds to muscle nicotinic acetylcholine receptor (nAChR) and inhibit acetylcholine from binding to the receptor, thereby impairing neuromuscular transmission. This chain is Short neurotoxin C, found in Aipysurus laevis (Olive sea snake).